The following is a 221-amino-acid chain: Serine/arginine-rich splicing factor 2 (221 aa).

Serine 2 carries the N-acetylserine modification. A Phosphoserine modification is found at serine 2. In terms of domain architecture, RRM spans 14–92 (TSLKVDNLTY…RELRVQMARY (79 aa)). Residues threonine 22 and threonine 25 each carry the phosphothreonine modification. Serine 26 is subject to Phosphoserine. Residue lysine 52 is modified to N6-acetyllysine. Residues 92 to 221 (YGRPPDSHHS…SPEEEGAVSS (130 aa)) are disordered. Composition is skewed to basic residues over residues 117–171 (RRSR…RSKS) and 179–189 (SRSRSRSRSRS). Serine 189, serine 191, serine 204, serine 206, serine 208, serine 212, and serine 220 each carry phosphoserine. Over residues 212–221 (SPEEEGAVSS) the composition is skewed to acidic residues.

Belongs to the splicing factor SR family. In vitro, self-associates and binds SRSF1/SFRS1 (ASF/SF2), SNRP70 and U2AF1 but not U2AF2. Binds SREK1/SFRS12. Interacts with CCNL1 and CCNL2. Interacts with SCAF11. Interacts with ZRSR2/U2AF1-RS2. Interacts with CCDC55 (via C-terminus). Interacts with BRDT. Post-translationally, extensively phosphorylated on serine residues in the RS domain. Phosphorylated by SRPK2 and this causes its redistribution from the nuclear speckle to nucleoplasm and controls cell fate decision in response to cisplatin treatment. KAT5/TIP60 inhibits its phosphorylation by preventing SRPK2 nuclear translocation. In terms of processing, acetylation on Lys-52 by KAT5/TIP60 promotes its proteasomal degradation. This effect is counterbalanced by HDAC6, which positively controls SRSF2 protein level by deacetylating it and preventing its proteasomal degradation.

Its subcellular location is the nucleus. It is found in the nucleoplasm. The protein resides in the nucleus speckle. Functionally, necessary for the splicing of pre-mRNA. It is required for formation of the earliest ATP-dependent splicing complex and interacts with spliceosomal components bound to both the 5'- and 3'-splice sites during spliceosome assembly. It also is required for ATP-dependent interactions of both U1 and U2 snRNPs with pre-mRNA. Interacts with other spliceosomal components, via the RS domains, to form a bridge between the 5'- and 3'-splice site binding components, U1 snRNP and U2AF. Binds to purine-rich RNA sequences, either 5'-AGSAGAGTA-3' (S=C or G) or 5'-GTTCGAGTA-3'. Can bind to beta-globin mRNA and commit it to the splicing pathway. The phosphorylated form (by SRPK2) is required for cellular apoptosis in response to cisplatin treatment. The sequence is that of Serine/arginine-rich splicing factor 2 (SRSF2) from Pan troglodytes (Chimpanzee).